A 421-amino-acid chain; its full sequence is Carboxypeptidase A4 (421 aa).

An N-terminal signal peptide occupies residues 1 to 16; it reads MRWILFIGALIGSSIC. A propeptide spans 17-113 (activation peptide); the sequence is GQEKFFGDQV…EMQHNEGQER (97 aa). Residues Pro-69, Val-71, Asn-119, Tyr-123, His-124, Ser-125, Glu-127, and Phe-163 each coordinate a protein. Positions 122–416 constitute a Peptidase M14 domain; sequence AYHSLEAIYH…LGLKTIMEHV (295 aa). His-181 and Glu-184 together coordinate Zn(2+). A protein is bound by residues Arg-196, Lys-197, and Ser-248. Residues Cys-250 and Cys-273 are joined by a disulfide bond. A glycan (N-linked (GlcNAc...) asparagine) is linked at Asn-260. Position 270 (Asp-270) interacts with a protein. Residue His-308 coordinates Zn(2+). Catalysis depends on Glu-382, which acts as the Proton donor/acceptor.

This sequence belongs to the peptidase M14 family. As to quaternary structure, monomer. Interacts with LXN. The cofactor is Zn(2+). In terms of tissue distribution, fetal expression in the adrenal gland, brain, heart, intestine, kidney, liver and lung. Except for fetal brain that shows no imprinting, expression was found preferentially from the maternal allele.

It is found in the secreted. Its activity is regulated as follows. Inhibited by interaction with the metallocarboxypeptidase inhibitor (MCPI) from N.versicolor that binds to the catalytic zinc ion. Also inhibited by interaction with the S.magnifica carboxypeptidase inhibitor SmCI that penetrates the active site groove and inhibits activity by emulating a C-terminal substrate. Additionally inhibited by a carboxypeptidase inhibitor from H.medicinalis (leech) and R.bursa (tick). Its function is as follows. Metalloprotease that cleaves hydrophobic C-terminal residues with a preference for -Phe, -Leu, -Ile, -Met, -Tyr and -Val. May function in peptide hormone and/or neuropeptide catabolism. The protein is Carboxypeptidase A4 (CPA4) of Homo sapiens (Human).